Reading from the N-terminus, the 280-residue chain is Ataxin-3 homolog (280 aa).

In terms of domain architecture, Josephin spans 7–187 (GGMLYHEVQE…QECPMSSSSE (181 aa)). Residue cysteine 20 is the Nucleophile of the active site. Catalysis depends on histidine 126, which acts as the Proton acceptor. The active site involves aspartate 141. Composition is skewed to polar residues over residues 183 to 194 (SSSSEASNSFGQ) and 221 to 232 (DNVNQQRRNQAL). Residues 183–240 (SSSSEASNSFGQWLSPEDAERIRKNTSSGSSARNKRSNDNVNQQRRNQALSREEVQAF) form a disordered region. The 20-residue stretch at 243-262 (MEDDDLKAAIAASLLDASAA) folds into the UIM domain.

The protein resides in the nucleus. It carries out the reaction Thiol-dependent hydrolysis of ester, thioester, amide, peptide and isopeptide bonds formed by the C-terminal Gly of ubiquitin (a 76-residue protein attached to proteins as an intracellular targeting signal).. Interacts with key regulators of transcription and represses transcription. Acts as a histone-binding protein that regulates transcription. Acts as a deubiquitinating enzyme. The protein is Ataxin-3 homolog of Arabidopsis thaliana (Mouse-ear cress).